The primary structure comprises 69 residues: MARVTVEDCLEKVDNRFLLVMLASKRVKQLYKGASPLIDNKAANKNVVVSLREIASGKVGYELTSRKAK.

It belongs to the RNA polymerase subunit omega family. In terms of assembly, the RNAP catalytic core consists of 2 alpha, 1 beta, 1 beta' and 1 omega subunit. When a sigma factor is associated with the core the holoenzyme is formed, which can initiate transcription.

The enzyme catalyses RNA(n) + a ribonucleoside 5'-triphosphate = RNA(n+1) + diphosphate. In terms of biological role, promotes RNA polymerase assembly. Latches the N- and C-terminal regions of the beta' subunit thereby facilitating its interaction with the beta and alpha subunits. This is DNA-directed RNA polymerase subunit omega from Geobacter metallireducens (strain ATCC 53774 / DSM 7210 / GS-15).